The chain runs to 635 residues: Sodium-dependent multivitamin transporter (635 aa).

3 helical membrane-spanning segments follow: residues 24–44 (FSIMDYVVFVLLLVLSLAIGL), 68–88 (CLPVALSLLATFQSAVAILGV), and 101–121 (FLGCCYFLGLLIPAHIFIPVF). An N-linked (GlcNAc...) asparagine glycan is attached at N138. 9 helical membrane passes run 143–163 (VCGTVTFIFQMVIYMGVVLYA), 176–196 (LWLSVLALGIVCTVYTALGGL), 199–219 (VIWTDVFQTLVMFLGQLAVII), 256–276 (FWTLAFGGVFMMLSLYGVNQA), 297–317 (VFPFQQVSLCVGCLIGLVMFA), 336–356 (FVLYFVMDLLKGLPGLPGLFI), 396–416 (IMLSRGLAFGYGLLCLGMAYI), 428–448 (ISIFGMVGGPLLGLFCLGMFF), and 456–476 (AVVGLLAGLVMAFWIGIGSIV). N-linked (GlcNAc...) asparagine glycans are attached at residues N489 and N498. Residues 528 to 548 (LWYSAHNSTTVIVVGLIVSLL) traverse the membrane as a helical segment.

It belongs to the sodium:solute symporter (SSF) (TC 2.A.21) family. As to quaternary structure, interacts with PDZD11. May be glycosylated. In terms of tissue distribution, expressed in microvessels of the brain (at protein level). Expressed in heart, brain, placenta, lung, liver, skeletal muscle, kidney, and pancreas.

It localises to the cell membrane. Its subcellular location is the apical cell membrane. It catalyses the reaction biotin(out) + 2 Na(+)(out) = biotin(in) + 2 Na(+)(in). The catalysed reaction is (R)-pantothenate(out) + 2 Na(+)(out) = (R)-pantothenate(in) + 2 Na(+)(in). The enzyme catalyses (R)-lipoate(out) + 2 Na(+)(out) = (R)-lipoate(in) + 2 Na(+)(in). It carries out the reaction iodide(out) + 2 Na(+)(out) = iodide(in) + 2 Na(+)(in). Its function is as follows. Sodium-dependent multivitamin transporter that mediates the electrogenic transport of pantothenate, biotin, lipoate and iodide. Functions as a Na(+)-coupled substrate symporter where the stoichiometry of Na(+):substrate is 2:1, creating an electrochemical Na(+) gradient used as driving force for substrate uptake. Required for biotin and pantothenate uptake in the intestine across the brush border membrane. Plays a role in the maintenance of intestinal mucosa integrity, by providing the gut mucosa with biotin. Contributes to the luminal uptake of biotin and pantothenate into the brain across the blood-brain barrier. The chain is Sodium-dependent multivitamin transporter from Homo sapiens (Human).